We begin with the raw amino-acid sequence, 194 residues long: dITP/XTP pyrophosphatase (194 aa).

Substrate is bound at residue 8–13 (TGNPGK). Mg(2+) contacts are provided by E38 and D67. The active-site Proton acceptor is the D67. Substrate is bound by residues S68, 146–149 (FGYD), K169, and 174–175 (HR).

This sequence belongs to the HAM1 NTPase family. As to quaternary structure, homodimer. Mg(2+) is required as a cofactor.

The enzyme catalyses XTP + H2O = XMP + diphosphate + H(+). It catalyses the reaction dITP + H2O = dIMP + diphosphate + H(+). It carries out the reaction ITP + H2O = IMP + diphosphate + H(+). Functionally, pyrophosphatase that catalyzes the hydrolysis of nucleoside triphosphates to their monophosphate derivatives, with a high preference for the non-canonical purine nucleotides XTP (xanthosine triphosphate), dITP (deoxyinosine triphosphate) and ITP. Seems to function as a house-cleaning enzyme that removes non-canonical purine nucleotides from the nucleotide pool, thus preventing their incorporation into DNA/RNA and avoiding chromosomal lesions. This Synechocystis sp. (strain ATCC 27184 / PCC 6803 / Kazusa) protein is dITP/XTP pyrophosphatase.